A 551-amino-acid chain; its full sequence is Cation/acetate symporter ActP (551 aa).

Transmembrane regions (helical) follow at residues Ile-34–Ala-54, Gly-77–Val-97, Gly-104–Glu-124, Leu-150–Ala-170, Val-184–Ala-204, Trp-207–Val-227, Ile-263–Leu-283, Gly-304–Val-324, Phe-356–Leu-376, Val-406–Glu-426, Ile-430–Phe-450, Leu-469–Leu-489, and Tyr-498–Ile-518.

Belongs to the sodium:solute symporter (SSF) (TC 2.A.21) family.

It localises to the cell inner membrane. Transports acetate. The sequence is that of Cation/acetate symporter ActP from Yersinia enterocolitica serotype O:8 / biotype 1B (strain NCTC 13174 / 8081).